A 279-amino-acid polypeptide reads, in one-letter code: NAD kinase (279 aa).

D57 functions as the Proton acceptor in the catalytic mechanism. Residues 57–58 (DG), 133–134 (NE), R159, D161, and 172–177 (TAYNKS) each bind NAD(+).

The protein belongs to the NAD kinase family. A divalent metal cation serves as cofactor.

The protein resides in the cytoplasm. The catalysed reaction is NAD(+) + ATP = ADP + NADP(+) + H(+). Functionally, involved in the regulation of the intracellular balance of NAD and NADP, and is a key enzyme in the biosynthesis of NADP. Catalyzes specifically the phosphorylation on 2'-hydroxyl of the adenosine moiety of NAD to yield NADP. This Streptococcus pyogenes serotype M12 (strain MGAS2096) protein is NAD kinase.